A 35-amino-acid chain; its full sequence is Photosystem II reaction center protein Psb30 (35 aa).

A helical transmembrane segment spans residues 7 to 27 (VFVQLALLALIVLAGPAVILL).

The protein belongs to the Psb30/Ycf12 family. As to quaternary structure, PSII is composed of 1 copy each of membrane proteins PsbA, PsbB, PsbC, PsbD, PsbE, PsbF, PsbH, PsbI, PsbJ, PsbK, PsbL, PsbM, PsbT, PsbX, PsbY, PsbZ, Psb30/Ycf12, peripheral proteins PsbO, CyanoQ (PsbQ), PsbU, PsbV and a large number of cofactors. It forms dimeric complexes.

It is found in the cellular thylakoid membrane. Its function is as follows. A core subunit of photosystem II (PSII), probably helps stabilize the reaction center. The polypeptide is Photosystem II reaction center protein Psb30 (Synechococcus sp. (strain JA-2-3B'a(2-13)) (Cyanobacteria bacterium Yellowstone B-Prime)).